We begin with the raw amino-acid sequence, 56 residues long: MAKKTAVELIALQCSECKRRNYTTSKNRKNIQGKLELMKYCSFDRKHTLHKETKIK.

It belongs to the bacterial ribosomal protein bL33 family.

This Treponema denticola (strain ATCC 35405 / DSM 14222 / CIP 103919 / JCM 8153 / KCTC 15104) protein is Large ribosomal subunit protein bL33.